The following is a 292-amino-acid chain: Phosphatidylglycerol--prolipoprotein diacylglyceryl transferase (292 aa).

A run of 6 helical transmembrane segments spans residues 25 to 45 (IALH…WWYA), 70 to 90 (FVVW…VLVW), 101 to 121 (AIIA…GIII), 138 to 158 (FDIV…CNFI), 193 to 213 (FMEG…FKAL), and 255 to 275 (GFTY…YLLL). Residue R153 coordinates a 1,2-diacyl-sn-glycero-3-phospho-(1'-sn-glycerol).

This sequence belongs to the Lgt family.

It localises to the cell inner membrane. The enzyme catalyses L-cysteinyl-[prolipoprotein] + a 1,2-diacyl-sn-glycero-3-phospho-(1'-sn-glycerol) = an S-1,2-diacyl-sn-glyceryl-L-cysteinyl-[prolipoprotein] + sn-glycerol 1-phosphate + H(+). The protein operates within protein modification; lipoprotein biosynthesis (diacylglyceryl transfer). Catalyzes the transfer of the diacylglyceryl group from phosphatidylglycerol to the sulfhydryl group of the N-terminal cysteine of a prolipoprotein, the first step in the formation of mature lipoproteins. The protein is Phosphatidylglycerol--prolipoprotein diacylglyceryl transferase of Bartonella quintana (strain Toulouse) (Rochalimaea quintana).